Here is a 271-residue protein sequence, read N- to C-terminus: Neurexophilin-1 (271 aa).

The first 21 residues, 1–21 (MQAACWYVLLLLQPTVYLVTC), serve as a signal peptide directing secretion. Residues 22–97 (ANLTNGGKSE…WDWLRNSTDL (76 aa)) form an II region. N-linked (GlcNAc...) asparagine glycosylation is found at Asn-23, Asn-68, Asn-93, Asn-146, Asn-156, and Asn-162. The III stretch occupies residues 98–176 (QEPRPRAKRR…LVPPTKIVEF (79 aa)). The interval 177–185 (DLAQQTVID) is IV (linker domain). Positions 186 to 271 (AKDSKSFNCR…HSDTPYFPSG (86 aa)) are v (Cys-rich).

It belongs to the neurexophilin family. Post-translationally, may be proteolytically processed at the boundary between the N-terminal non-conserved and the central conserved domain in neuron-like cells.

It localises to the secreted. Its function is as follows. May be signaling molecules that resemble neuropeptides. Ligand for alpha-neurexins. In Bos taurus (Bovine), this protein is Neurexophilin-1 (NXPH1).